Consider the following 215-residue polypeptide: Probable phosphoglycerate mutase GpmB (215 aa).

Residues 8–15, 21–22, R58, K60, 82–85, 104–105, and 151–152 each bind substrate; these read RHGETQWN, QG, ELDM, RR, and GI. H9 (tele-phosphohistidine intermediate) is an active-site residue. E82 serves as the catalytic Proton donor/acceptor.

It belongs to the phosphoglycerate mutase family. GpmB subfamily.

The catalysed reaction is (2R)-2-phosphoglycerate = (2R)-3-phosphoglycerate. It functions in the pathway carbohydrate degradation; glycolysis; pyruvate from D-glyceraldehyde 3-phosphate: step 3/5. The sequence is that of Probable phosphoglycerate mutase GpmB from Salmonella arizonae (strain ATCC BAA-731 / CDC346-86 / RSK2980).